The primary structure comprises 391 residues: E1B 55 kDa protein (391 aa).

Ser387 is subject to Phosphoserine.

It belongs to the adenoviridae E1B 55 kDa protein family. As to quaternary structure, interacts with host PML-4 and PML-5; this interaction promotes efficient subnuclear targeting of E1B-55K to PML nuclear bodies. Interacts with E4-ORF3 protein. Interacts with E4-ORF6 protein.

The protein resides in the host nucleus. The protein localises to the host cytoplasm. Plays a major role to prevent cellular inhibition of viral genome replication. Assembles an SCF-like E3 ubiquitin ligase complex based on the cellular proteins ELOB, ELOC, CUL5 and RBX1, in cooperation with viral E4orf6. This viral RING-type ligase ubiquitinates cellular substrates and targets them to proteasomal degradation: TP53/p53, LIG4, MRE11-RAD50-NBS1 (MRN) complex, ITGA3, DAXX and BLM. E1B-55K probably acts as the substrate-specific adapter of the SCF-like E3 ubiquitin ligase complex. Degradation of host TP53/p53 activity is essential for preventing E1A-induced TP53 accumulation that would otherwise lead to cell apoptosis and growth arrest. E1B-55K also inactivates TP53 transcription-factor activity by binding its transactivation domain. E1B-55K also functions as a SUMO1 E3 ligase for TP53 which causes the latter to be sequestered in promyelocytic leukemia (PML) nuclear bodies thereby contributing to maximal inhibition of TP53 function. The protein is E1B 55 kDa protein of Tree shrew adenovirus serotype 1 (TSAdV-1).